A 302-amino-acid chain; its full sequence is Putative S-adenosyl-L-methionine-dependent methyltransferase MAV_2803 (302 aa).

Residues Asp-129 and Asp-158–Leu-159 each bind S-adenosyl-L-methionine.

The protein belongs to the UPF0677 family.

Its function is as follows. Exhibits S-adenosyl-L-methionine-dependent methyltransferase activity. The protein is Putative S-adenosyl-L-methionine-dependent methyltransferase MAV_2803 of Mycobacterium avium (strain 104).